We begin with the raw amino-acid sequence, 209 residues long: dITP/XTP pyrophosphatase (209 aa).

7–12 (SSHGYK) contributes to the substrate binding site. Aspartate 70 acts as the Proton acceptor in catalysis. A Mg(2+)-binding site is contributed by aspartate 70. Substrate is bound by residues serine 71, 154–157 (FGYD), lysine 177, and 182–183 (HR).

This sequence belongs to the HAM1 NTPase family. In terms of assembly, homodimer. Requires Mg(2+) as cofactor.

It carries out the reaction XTP + H2O = XMP + diphosphate + H(+). The catalysed reaction is dITP + H2O = dIMP + diphosphate + H(+). The enzyme catalyses ITP + H2O = IMP + diphosphate + H(+). In terms of biological role, pyrophosphatase that catalyzes the hydrolysis of nucleoside triphosphates to their monophosphate derivatives, with a high preference for the non-canonical purine nucleotides XTP (xanthosine triphosphate), dITP (deoxyinosine triphosphate) and ITP. Seems to function as a house-cleaning enzyme that removes non-canonical purine nucleotides from the nucleotide pool, thus preventing their incorporation into DNA/RNA and avoiding chromosomal lesions. The polypeptide is dITP/XTP pyrophosphatase (Chlamydia trachomatis serovar A (strain ATCC VR-571B / DSM 19440 / HAR-13)).